The chain runs to 526 residues: Bifunctional purine biosynthesis protein PurH (526 aa).

The MGS-like domain maps to 1–145 (MSKAPLALLS…KNHAHVGIVT (145 aa)).

It belongs to the PurH family.

The catalysed reaction is (6R)-10-formyltetrahydrofolate + 5-amino-1-(5-phospho-beta-D-ribosyl)imidazole-4-carboxamide = 5-formamido-1-(5-phospho-D-ribosyl)imidazole-4-carboxamide + (6S)-5,6,7,8-tetrahydrofolate. It catalyses the reaction IMP + H2O = 5-formamido-1-(5-phospho-D-ribosyl)imidazole-4-carboxamide. It participates in purine metabolism; IMP biosynthesis via de novo pathway; 5-formamido-1-(5-phospho-D-ribosyl)imidazole-4-carboxamide from 5-amino-1-(5-phospho-D-ribosyl)imidazole-4-carboxamide (10-formyl THF route): step 1/1. Its pathway is purine metabolism; IMP biosynthesis via de novo pathway; IMP from 5-formamido-1-(5-phospho-D-ribosyl)imidazole-4-carboxamide: step 1/1. This chain is Bifunctional purine biosynthesis protein PurH, found in Psychrobacter cryohalolentis (strain ATCC BAA-1226 / DSM 17306 / VKM B-2378 / K5).